The chain runs to 122 residues: Large ribosomal subunit protein uL18 (122 aa).

The protein belongs to the universal ribosomal protein uL18 family. In terms of assembly, part of the 50S ribosomal subunit; part of the 5S rRNA/L5/L18/L25 subcomplex. Contacts the 5S and 23S rRNAs.

Its function is as follows. This is one of the proteins that bind and probably mediate the attachment of the 5S RNA into the large ribosomal subunit, where it forms part of the central protuberance. The polypeptide is Large ribosomal subunit protein uL18 (Leptospira interrogans serogroup Icterohaemorrhagiae serovar copenhageni (strain Fiocruz L1-130)).